Consider the following 484-residue polypeptide: 6-phosphogluconate dehydrogenase, decarboxylating (484 aa).

Residues 11-16 (GLAVMG), 34-36 (NRT), 76-78 (VRA), and N104 each bind NADP(+). Substrate contacts are provided by residues N104 and 130–132 (SGG). K185 acts as the Proton acceptor in catalysis. 188–189 (HN) contributes to the substrate binding site. The active-site Proton donor is the E192. Residues Y193, K262, R289, R447, and H453 each contribute to the substrate site.

It belongs to the 6-phosphogluconate dehydrogenase family. In terms of assembly, homodimer.

The enzyme catalyses 6-phospho-D-gluconate + NADP(+) = D-ribulose 5-phosphate + CO2 + NADPH. The protein operates within carbohydrate degradation; pentose phosphate pathway; D-ribulose 5-phosphate from D-glucose 6-phosphate (oxidative stage): step 3/3. In terms of biological role, catalyzes the oxidative decarboxylation of 6-phosphogluconate to ribulose 5-phosphate and CO(2), with concomitant reduction of NADP to NADPH. This is 6-phosphogluconate dehydrogenase, decarboxylating (gnd) from Haemophilus ducreyi (strain 35000HP / ATCC 700724).